Consider the following 803-residue polypeptide: Zinc finger X-linked protein ZXDB (803 aa).

3 disordered regions span residues 1-91 (MEIP…GGDD), 120-140 (EAEE…AGPT), and 218-260 (AAHP…GPRG). The segment covering 13–26 (LQGGGGGGIPAGGG) has biased composition (gly residues). C2H2-type zinc fingers lie at residues 271–295 (YLCP…LLTH), 304–328 (FKCP…LQSH), 334–358 (FGCP…MKGH), 364–386 (FKCE…QRSH), 393–417 (YQCA…NRAH), 424–448 (FSCS…LRSH), 454–478 (FLCD…KRKH), 484–508 (FMCP…SITH), 514–538 (FVCP…SKKH), and 547–572 (SRCP…VKRH). The interval 271–577 (YLCPEAQCGQ…MVKRHKVGQD (307 aa)) is required for interaction with ZXDC. Positions 576–703 (QDLLAQLEAA…NMDEVSSVSV (128 aa)) are required for transcriptional activation.

Belongs to the ZXD family. As to quaternary structure, self-associates. Interacts with ZXDC and CIITA. May be expressed in brain, heart, kidney, liver, lung, muscle and placenta.

Its subcellular location is the nucleus. Functionally, cooperates with CIITA to promote transcription of MHC class I and MHC class II genes. This is Zinc finger X-linked protein ZXDB (ZXDB) from Homo sapiens (Human).